A 260-amino-acid polypeptide reads, in one-letter code: Diphthine synthase (260 aa).

S-adenosyl-L-methionine contacts are provided by residues Leu-9, Asp-85, Ile-88, 113–114 (TA), Leu-168, Ala-208, and His-233.

This sequence belongs to the diphthine synthase family. As to quaternary structure, homodimer.

The catalysed reaction is 2-[(3S)-amino-3-carboxypropyl]-L-histidyl-[translation elongation factor 2] + 3 S-adenosyl-L-methionine = diphthine-[translation elongation factor 2] + 3 S-adenosyl-L-homocysteine + 3 H(+). Its pathway is protein modification; peptidyl-diphthamide biosynthesis. S-adenosyl-L-methionine-dependent methyltransferase that catalyzes the trimethylation of the amino group of the modified target histidine residue in translation elongation factor 2 (EF-2), to form an intermediate called diphthine. The three successive methylation reactions represent the second step of diphthamide biosynthesis. This is Diphthine synthase from Halobacterium salinarum (strain ATCC 29341 / DSM 671 / R1).